The following is a 225-amino-acid chain: Uridylate kinase (225 aa).

9–10 provides a ligand contact to ATP; sequence GS. Gly43 is a binding site for UMP. Residues Gly44 and Arg48 each contribute to the ATP site. UMP is bound by residues Asp65 and 113–119; that span reads TEPAHST. ATP contacts are provided by Thr139, Tyr145, and Asp148.

It belongs to the UMP kinase family. In terms of assembly, homohexamer.

It is found in the cytoplasm. It catalyses the reaction UMP + ATP = UDP + ADP. It participates in pyrimidine metabolism; CTP biosynthesis via de novo pathway; UDP from UMP (UMPK route): step 1/1. With respect to regulation, inhibited by UTP. Its function is as follows. Catalyzes the reversible phosphorylation of UMP to UDP. This chain is Uridylate kinase, found in Methanobrevibacter smithii (strain ATCC 35061 / DSM 861 / OCM 144 / PS).